The primary structure comprises 456 residues: Probable hexose phosphate transport protein (456 aa).

The next 11 helical transmembrane spans lie at 34–54, 70–90, 113–133, 161–181, 185–205, 257–277, 302–322, 331–351, 363–383, 394–414, and 421–441; these read IFYS…SFTF, LGII…VSGV, IFFG…INGW, VWST…GVAI, GWRG…FILI, YVLS…IYVV, LCVS…GWLS, GPMN…LWGT, FLFI…LAAA, ASGF…YPLG, and GWHG…ILFL.

It belongs to the major facilitator superfamily. Organophosphate:Pi antiporter (OPA) (TC 2.A.1.4) family.

It is found in the cell membrane. Transport protein for sugar phosphate uptake. The chain is Probable hexose phosphate transport protein from Chlamydia trachomatis serovar D (strain ATCC VR-885 / DSM 19411 / UW-3/Cx).